A 1308-amino-acid polypeptide reads, in one-letter code: Misshapen-like kinase 1 (1308 aa).

Positions 25 to 289 constitute a Protein kinase domain; that stretch reads FELVEVVGNG…TEQLLKFPFI (265 aa). ATP contacts are provided by residues 31-39 and Lys-54; that span reads VGNGTYGQV. Catalysis depends on Asp-153, which acts as the Proton acceptor. Disordered regions lie at residues 299 to 347, 363 to 383, and 395 to 862; these read RIQL…NVPG, KSNS…QRDP, and QRRI…GGTM. The segment covering 317–333 has biased composition (acidic residues); the sequence is EETEYEYSGSEEEDDSH. Phosphoserine occurs at positions 324 and 326. The span at 371 to 380 shows a compositional bias: low complexity; sequence QQQQLQQQQQ. Residues 396 to 466 show a composition bias toward basic and acidic residues; it reads RRIEEQKEER…EEQRQSERLQ (71 aa). Over residues 479 to 497 the composition is skewed to low complexity; the sequence is LQQQQQQQQLQKQQQQQQQ. Residues Arg-503 and Arg-511 each carry the omega-N-methylarginine modification. Basic and acidic residues predominate over residues 520–530; it reads AWAREVEERAR. Residues 600–610 are compositionally biased toward polar residues; sequence RSQSLQDQPTR. Positions 623–633 are enriched in low complexity; it reads PAAVPTPTATP. Phosphoserine is present on Ser-644. Over residues 673-685 the composition is skewed to polar residues; the sequence is QRTSSIATALNTS. Asp-702, Ser-720, Ser-729, Ser-745, Ser-746, and Ser-750 each carry phosphoserine. Basic and acidic residues predominate over residues 702 to 714; it reads DLRRSDPGWERSD. The segment covering 773-797 has biased composition (basic and acidic residues); the sequence is AIGEDFVLLKERTLDEAPKPPKKAM. Positions 804-820 are enriched in acidic residues; sequence EEVESSEEEEEEGDGEP. Positions 842-1308 are mediates interaction with RAP2A; that stretch reads MVVHDVEEIS…TLNRNCIMNW (467 aa). Thr-867 bears the Phosphothreonine mark. The tract at residues 881–918 is disordered; sequence GYTNLPDVVQPSHSPTENSKGQSPPTKDGGSDYQSRGL. Over residues 891–905 the composition is skewed to polar residues; sequence PSHSPTENSKGQSPP. The region spanning 995–1282 is the CNH domain; the sequence is NSEILCAALW…KFLCERNDKV (288 aa).

This sequence belongs to the protein kinase superfamily. STE Ser/Thr protein kinase family. STE20 subfamily. Interacts with RAP2A and TANC1. Interacts with NCK1. The cofactor is Mg(2+). In terms of processing, autophosphorylated. As to expression, appears to be ubiquitous, expressed in all tissue types examined. Highly expressed in the brain, moderately expressed in kidney and spleen, low levels present in heart and skeletal muscle. Isoform 2 is more abundant in the brain than isoform 1.

It is found in the cytoplasm. It localises to the postsynaptic density. Its subcellular location is the cell projection. The protein resides in the axon. The protein localises to the dendrite. It catalyses the reaction L-seryl-[protein] + ATP = O-phospho-L-seryl-[protein] + ADP + H(+). The enzyme catalyses L-threonyl-[protein] + ATP = O-phospho-L-threonyl-[protein] + ADP + H(+). Functionally, serine/threonine kinase which acts as a negative regulator of Ras-related Rap2-mediated signal transduction to control neuronal structure and AMPA receptor trafficking. Required for normal synaptic density, dendrite complexity, as well as surface AMPA receptor expression in hippocampal neurons. Can activate the JNK and MAPK14/p38 pathways and mediates stimulation of the stress-activated protein kinase MAPK14/p38 MAPK downstream of the Raf/ERK pathway. Phosphorylates TANC1 upon stimulation by RAP2A, MBP and SMAD1. Has an essential function in negative selection of thymocytes, perhaps by coupling NCK1 to activation of JNK1. Activator of the Hippo signaling pathway which plays a pivotal role in organ size control and tumor suppression by restricting proliferation and promoting apoptosis. MAP4Ks act in parallel to and are partially redundant with STK3/MST2 and STK4/MST2 in the phosphorylation and activation of LATS1/2, and establish MAP4Ks as components of the expanded Hippo pathway. This chain is Misshapen-like kinase 1, found in Mus musculus (Mouse).